Reading from the N-terminus, the 407-residue chain is Substance-P receptor (407 aa).

Topologically, residues 1 to 31 (MDNVLPVDSDLFPNISTNTSEPNQFVQPAWQ) are extracellular. N14 and N18 each carry an N-linked (GlcNAc...) asparagine glycan. The helical transmembrane segment at 32–54 (IVLWAAAYTVIVVTSVVGNVVVM) threads the bilayer. The Cytoplasmic segment spans residues 55–64 (WIILAHKRMR). Residues 65 to 86 (TVTNYFLVNLAFAEASMAAFNT) traverse the membrane as a helical segment. Over 87-106 (VVNFTYAVHNEWYYGLFYCK) the chain is Extracellular. A disulfide bond links C105 and C180. Residues 107 to 128 (FHNFFPIAAVFASIYSMTAVAF) form a helical membrane-spanning segment. The Cytoplasmic segment spans residues 129–148 (DRYMAIIHPLQPRLSATATK). The chain crosses the membrane as a helical span at residues 149 to 169 (VVICVIWVLALLLAFPQGYYS). The Extracellular segment spans residues 170-194 (TTETMPGRVVCMIEWPSHPDKIYEK). The helical transmembrane segment at 195–219 (VYHICVTVLIYFLPLLVIGYAYTVV) threads the bilayer. Residues 220–248 (GITLWASEIPGDSSDRYHEQVSAKRKVVK) lie on the Cytoplasmic side of the membrane. A helical membrane pass occupies residues 249 to 270 (MMIVVVCTFAICWLPFHIFFLL). The Extracellular segment spans residues 271–283 (PYINPDLYLKKFI). Residues 284 to 308 (QQVYLAIMWLAMSSTMYNPIIYCCL) traverse the membrane as a helical segment. The Cytoplasmic segment spans residues 309–407 (NDRFRLGFKH…SSSFYSNMLS (99 aa)). The S-palmitoyl cysteine moiety is linked to residue C322. Residues 363–407 (GAHEEDPEEGPKATPSSLDLTSNGSSRSNSKTVTESSSFYSNMLS) are disordered. The segment covering 376 to 407 (TPSSLDLTSNGSSRSNSKTVTESSSFYSNMLS) has biased composition (polar residues).

This sequence belongs to the G-protein coupled receptor 1 family. In terms of assembly, interacts with ARRB1.

The protein localises to the cell membrane. Its function is as follows. This is a receptor for the tachykinin neuropeptide substance P. It is probably associated with G proteins that activate a phosphatidylinositol-calcium second messenger system. The rank order of affinity of this receptor to tachykinins is: substance P &gt; substance K &gt; neuromedin-K. In Cavia porcellus (Guinea pig), this protein is Substance-P receptor (TACR1).